A 432-amino-acid chain; its full sequence is 3-phosphoshikimate 1-carboxyvinyltransferase (432 aa).

3-phosphoshikimate contacts are provided by Lys23, Ser24, and Arg28. Lys23 is a phosphoenolpyruvate binding site. Phosphoenolpyruvate-binding residues include Gly95 and Arg123. The 3-phosphoshikimate site is built by Ser167, Gln169, Asp317, and Lys344. Phosphoenolpyruvate is bound at residue Gln169. Residue Asp317 is the Proton acceptor of the active site. Phosphoenolpyruvate is bound by residues Arg348 and Arg390.

Belongs to the EPSP synthase family. Monomer.

The protein resides in the cytoplasm. The enzyme catalyses 3-phosphoshikimate + phosphoenolpyruvate = 5-O-(1-carboxyvinyl)-3-phosphoshikimate + phosphate. Its pathway is metabolic intermediate biosynthesis; chorismate biosynthesis; chorismate from D-erythrose 4-phosphate and phosphoenolpyruvate: step 6/7. Functionally, catalyzes the transfer of the enolpyruvyl moiety of phosphoenolpyruvate (PEP) to the 5-hydroxyl of shikimate-3-phosphate (S3P) to produce enolpyruvyl shikimate-3-phosphate and inorganic phosphate. The chain is 3-phosphoshikimate 1-carboxyvinyltransferase from Staphylococcus aureus (strain JH9).